A 310-amino-acid chain; its full sequence is Proline dehydrogenase (310 aa).

Residue lysine 98 participates in substrate binding. Aspartate 135 is a catalytic residue. FAD is bound by residues methionine 136, glutamine 166, 187 to 192 (RMVKGA), 229 to 230 (TH), and 292 to 295 (RIAE). The active site involves arginine 187. Substrate is bound at residue 291-292 (RR).

The protein belongs to the proline dehydrogenase family. FAD serves as cofactor.

The enzyme catalyses L-proline + a quinone = (S)-1-pyrroline-5-carboxylate + a quinol + H(+). The protein operates within amino-acid degradation; L-proline degradation into L-glutamate; L-glutamate from L-proline: step 1/2. Its function is as follows. Converts proline to delta-1-pyrroline-5-carboxylate. The chain is Proline dehydrogenase from Deinococcus radiodurans (strain ATCC 13939 / DSM 20539 / JCM 16871 / CCUG 27074 / LMG 4051 / NBRC 15346 / NCIMB 9279 / VKM B-1422 / R1).